Reading from the N-terminus, the 434-residue chain is Adenylosuccinate synthetase (434 aa).

GTP-binding positions include 22 to 28 (GDEGKGK) and 50 to 52 (GHT). The Proton acceptor role is filled by Asp23. Asp23 and Gly50 together coordinate Mg(2+). IMP-binding positions include 23-26 (DEGK), 48-51 (NAGH), Thr139, Arg153, Gln234, Thr249, and Arg313. The Proton donor role is filled by His51. Residue 309-315 (ATTGRKR) coordinates substrate. GTP contacts are provided by residues Arg315, 341 to 343 (KLD), and 423 to 425 (SVG).

It belongs to the adenylosuccinate synthetase family. Homodimer. The cofactor is Mg(2+).

It is found in the cytoplasm. It carries out the reaction IMP + L-aspartate + GTP = N(6)-(1,2-dicarboxyethyl)-AMP + GDP + phosphate + 2 H(+). It participates in purine metabolism; AMP biosynthesis via de novo pathway; AMP from IMP: step 1/2. Functionally, plays an important role in the de novo pathway of purine nucleotide biosynthesis. Catalyzes the first committed step in the biosynthesis of AMP from IMP. This chain is Adenylosuccinate synthetase, found in Chlorobium luteolum (strain DSM 273 / BCRC 81028 / 2530) (Pelodictyon luteolum).